The primary structure comprises 96 residues: uncharacterized protein (96 aa).

Positions 1–23 are cleaved as a signal peptide; it reads MKQFYSVVLTIIIYISSQSNVVS. 3 disulfides stabilise this stretch: Cys-60–Cys-74, Cys-67–Cys-78, and Cys-73–Cys-83.

The protein localises to the secreted. This is an uncharacterized protein from Schistosoma japonicum (Blood fluke).